Consider the following 423-residue polypeptide: NADH-quinone oxidoreductase subunit F (423 aa).

NAD(+) is bound at residue 54-63; it reads GRGGAGFSTG. 166–213 contributes to the FMN binding site; the sequence is GAGAYICGEETALLESLEGKKGMPRLKPPFPAGFGLYGCPTTINNVES. 4 residues coordinate [4Fe-4S] cluster: Cys344, Cys347, Cys350, and Cys390.

Belongs to the complex I 51 kDa subunit family. FMN is required as a cofactor. [4Fe-4S] cluster serves as cofactor.

The catalysed reaction is a quinone + NADH + 5 H(+)(in) = a quinol + NAD(+) + 4 H(+)(out). NDH-1 shuttles electrons from NADH, via FMN and iron-sulfur (Fe-S) centers, to quinones in the respiratory chain. Couples the redox reaction to proton translocation (for every two electrons transferred, four hydrogen ions are translocated across the cytoplasmic membrane), and thus conserves the redox energy in a proton gradient. This chain is NADH-quinone oxidoreductase subunit F (nuoF), found in Rickettsia akari (strain Hartford).